The primary structure comprises 202 residues: LexA repressor (202 aa).

Positions 28 to 48 (RAEIAQRLGFRSPNAAEEHLK) form a DNA-binding region, H-T-H motif. Residues serine 119 and lysine 156 each act as for autocatalytic cleavage activity in the active site.

The protein belongs to the peptidase S24 family. In terms of assembly, homodimer.

It catalyses the reaction Hydrolysis of Ala-|-Gly bond in repressor LexA.. Represses a number of genes involved in the response to DNA damage (SOS response), including recA and lexA. Binds to the 16 bp palindromic sequence 5'-CTGTATATATATACAG-3'. In the presence of single-stranded DNA, RecA interacts with LexA causing an autocatalytic cleavage which disrupts the DNA-binding part of LexA, leading to derepression of the SOS regulon and eventually DNA repair. The polypeptide is LexA repressor (Klebsiella pneumoniae subsp. pneumoniae (strain ATCC 700721 / MGH 78578)).